Consider the following 269-residue polypeptide: Putative hydro-lyase RL2444 (269 aa).

Belongs to the D-glutamate cyclase family.

This is Putative hydro-lyase RL2444 from Rhizobium johnstonii (strain DSM 114642 / LMG 32736 / 3841) (Rhizobium leguminosarum bv. viciae).